Here is a 473-residue protein sequence, read N- to C-terminus: tRNA modification GTPase MnmE (473 aa).

R28, E93, and R132 together coordinate (6S)-5-formyl-5,6,7,8-tetrahydrofolate. One can recognise a TrmE-type G domain in the interval 228–394 (GVATVLVGSP…LKQQMSNMVA (167 aa)). GTP-binding positions include 238 to 243 (NAGKST), 257 to 263 (SHQPGTT), and 282 to 285 (DTAG). S242 and T263 together coordinate Mg(2+). K473 serves as a coordination point for (6S)-5-formyl-5,6,7,8-tetrahydrofolate.

The protein belongs to the TRAFAC class TrmE-Era-EngA-EngB-Septin-like GTPase superfamily. TrmE GTPase family. As to quaternary structure, homodimer. Heterotetramer of two MnmE and two MnmG subunits. It depends on K(+) as a cofactor.

It is found in the cytoplasm. Its function is as follows. Exhibits a very high intrinsic GTPase hydrolysis rate. Involved in the addition of a carboxymethylaminomethyl (cmnm) group at the wobble position (U34) of certain tRNAs, forming tRNA-cmnm(5)s(2)U34. The protein is tRNA modification GTPase MnmE of Chlorobium chlorochromatii (strain CaD3).